The sequence spans 154 residues: Putative glutamine amidotransferase-like protein RP712 (154 aa).

Residues 1–94 (MSIEKEKFWA…QQSVWSFHNK (94 aa)) enclose the Glutamine amidotransferase type-1 domain.

This is Putative glutamine amidotransferase-like protein RP712 from Rickettsia prowazekii (strain Madrid E).